The chain runs to 360 residues: Sorbitol dehydrogenase (360 aa).

Zn(2+) is bound at residue C42. Y48 contacts substrate. Positions 67 and 68 each coordinate Zn(2+). A substrate-binding site is contributed by E153. Residues D201, R206, 277–279 (AGN), and 301–303 (SFR) contribute to the NAD(+) site. Substrate-binding residues include R303 and Y304.

This sequence belongs to the zinc-containing alcohol dehydrogenase family. In terms of assembly, homotetramer. Zn(2+) serves as cofactor.

The enzyme catalyses keto-D-fructose + NADH + H(+) = D-sorbitol + NAD(+). In terms of biological role, polyol dehydrogenase that catalyzes the reversible NAD(+)-dependent oxidation of various sugar alcohols. Is active with D-sorbitol (D-glucitol) as substrate, leading to the C2-oxidized product D-fructose. Suppresses growth arrest induced by a p53 tumor mutant in fission yeast. This chain is Sorbitol dehydrogenase (tms1), found in Schizosaccharomyces pombe (strain 972 / ATCC 24843) (Fission yeast).